Consider the following 220-residue polypeptide: Fructose-6-phosphate aldolase 2 (220 aa).

The active-site Schiff-base intermediate with substrate is K85.

The protein belongs to the transaldolase family. Type 3A subfamily. As to quaternary structure, homodecamer.

It is found in the cytoplasm. It catalyses the reaction beta-D-fructose 6-phosphate = dihydroxyacetone + D-glyceraldehyde 3-phosphate. Its function is as follows. Catalyzes the reversible formation of fructose 6-phosphate from dihydroxyacetone and D-glyceraldehyde 3-phosphate via an aldolization reaction. Can utilize hydroxyacetone as an alternative donor substrate. Is also able to catalyze the direct self-aldol addition of glycolaldehyde. Is less catalytically efficient than the isozyme FsaA. Does not display transaldolase activity. The protein is Fructose-6-phosphate aldolase 2 (fsaB) of Escherichia coli (strain K12).